Here is a 197-residue protein sequence, read N- to C-terminus: Dehydrin DHN1 (197 aa).

Polar residues predominate over residues M1–M14. 2 disordered regions span residues M1–P86 and G133–H197. 2 consecutive repeat copies span residues D16–P21 and D26–P31. Residues D16 to P31 form a 2 X approximate repeats region. Positions T74–G83 are enriched in gly residues. The stretch at K126 to G133 is one 2-1 repeat. The tract at residues K126–G190 is 2 X approximate repeats. Over residues A144–N160 the composition is skewed to gly residues. Positions Y165–L188 are enriched in basic and acidic residues. The 2-2 repeat unit spans residues K183–G190.

It belongs to the plant dehydrin family. In terms of tissue distribution, shoots, roots, and cotyledon from dehydrating seedlings.

This Pisum sativum (Garden pea) protein is Dehydrin DHN1 (DHN1).